Here is a 1038-residue protein sequence, read N- to C-terminus: Translation initiation factor IF-2 (1038 aa).

Positions 32–442 (GSALASLSDE…RKGVNTAAPR (411 aa)) are disordered. 3 stretches are compositionally biased toward low complexity: residues 65 to 77 (PPTKDTPTAPVAP), 100 to 113 (PAEAADNPNAPAQP), and 131 to 147 (PKLAPAPEAKAPEAPAA). Basic and acidic residues-rich tracts occupy residues 204–217 (SGGRKAPESPKRES) and 275–295 (RSLDRSRNRPEEAAKAGDAGK). Residues 311 to 328 (PSAPAKPAAPTGSSGPAA) are compositionally biased toward low complexity. The segment covering 331-344 (PDIKLTRDVIEGHK) has biased composition (basic and acidic residues). Over residues 422–435 (HHYRRSRPRIRRKG) the composition is skewed to basic residues. Positions 529–696 (ARPPVVTFLG…TLLTIAELNE (168 aa)) constitute a tr-type G domain. The segment at 538 to 545 (GHVDHGKT) is G1. 538–545 (GHVDHGKT) is a GTP binding site. Residues 563-567 (GITQH) form a G2 region. Residues 584–587 (DTPG) are G3. Residues 584 to 588 (DTPGH) and 638 to 641 (NKID) contribute to the GTP site. Positions 638–641 (NKID) are G4. The segment at 674-676 (SAT) is G5.

Belongs to the TRAFAC class translation factor GTPase superfamily. Classic translation factor GTPase family. IF-2 subfamily.

It localises to the cytoplasm. Functionally, one of the essential components for the initiation of protein synthesis. Protects formylmethionyl-tRNA from spontaneous hydrolysis and promotes its binding to the 30S ribosomal subunits. Also involved in the hydrolysis of GTP during the formation of the 70S ribosomal complex. This Rhodopirellula baltica (strain DSM 10527 / NCIMB 13988 / SH1) protein is Translation initiation factor IF-2.